A 394-amino-acid chain; its full sequence is MARIETRTEPMVLNMGPHHPSMHGVLRLIVTLDGEDVVDCEPVIGYLHRGMEKIAENRTTVMYVPYVSRWDYAAGMFNEAVTVNAPEKLAGVAVPKRASYIRVIMLELNRIANHLLWFGPFLADVGAQTPFFYQFREREMIYDLWEAATGYRMVNNNYFRVGGVAADLPYGWVDKCLEFCDYFLPVVDEYEKLVTNNPIFRRRIEGIGTISREEAINWGLSGPMLRASGVKWDLRKVDHYESYDDFDWDVQWETAGDCLARYTVRMREMRESVKIIKQAIKGLPGGPYENLEAKRLIAGKKSEWDAFDYQYIGKKVSPTFKMPKGEIYARVESGKGELGIYLIGDDNVFPWRWKIRPADFNNLQILPHLLRGMKVADIVVILGSIDVIMGSVDR.

It belongs to the complex I 49 kDa subunit family. In terms of assembly, NDH-1 can be composed of about 15 different subunits; different subcomplexes with different compositions have been identified which probably have different functions.

The protein resides in the cellular thylakoid membrane. It carries out the reaction a plastoquinone + NADH + (n+1) H(+)(in) = a plastoquinol + NAD(+) + n H(+)(out). The enzyme catalyses a plastoquinone + NADPH + (n+1) H(+)(in) = a plastoquinol + NADP(+) + n H(+)(out). In terms of biological role, NDH-1 shuttles electrons from an unknown electron donor, via FMN and iron-sulfur (Fe-S) centers, to quinones in the respiratory and/or the photosynthetic chain. The immediate electron acceptor for the enzyme in this species is believed to be plastoquinone. Couples the redox reaction to proton translocation, and thus conserves the redox energy in a proton gradient. Cyanobacterial NDH-1 also plays a role in inorganic carbon-concentration. The protein is NAD(P)H-quinone oxidoreductase subunit H of Trichormus variabilis (strain ATCC 29413 / PCC 7937) (Anabaena variabilis).